Reading from the N-terminus, the 327-residue chain is Probable cell division protein WhiA (327 aa).

Residues 275–308 (SLEELGQLADPPMTKDAVAGRIRRLLSMADRKAK) constitute a DNA-binding region (H-T-H motif). A disordered region spans residues 306-327 (KAKETGIPDTESAVTADLLDDA).

The protein belongs to the WhiA family.

Involved in cell division and chromosome segregation. This Rhodococcus jostii (strain RHA1) protein is Probable cell division protein WhiA.